The following is a 149-amino-acid chain: UPF0178 protein Pmen_0294 (149 aa).

The protein belongs to the UPF0178 family.

The sequence is that of UPF0178 protein Pmen_0294 from Ectopseudomonas mendocina (strain ymp) (Pseudomonas mendocina).